The chain runs to 62 residues: Potassium channel toxin kappa-KTx 3.3 (62 aa).

Positions M1 to A26 are cleaved as a signal peptide. The propeptide occupies E27–E36. Cystine bridges form between C43–C61 and C47–C57.

This sequence belongs to the short scorpion toxin superfamily. Potassium channel inhibitor kappa-KTx family. Kappa-KTx 3 subfamily. As to expression, expressed by the venom gland.

Its subcellular location is the secreted. Its function is as follows. Potassium channel inhibitor (Kv). The polypeptide is Potassium channel toxin kappa-KTx 3.3 (Heterometrus petersii (Asian forest scorpion)).